The primary structure comprises 168 residues: G/U mismatch-specific DNA glycosylase (168 aa).

It belongs to the uracil-DNA glycosylase (UDG) superfamily. TDG/mug family. As to quaternary structure, binds DNA as a monomer.

The protein localises to the cytoplasm. It carries out the reaction Specifically hydrolyzes mismatched double-stranded DNA and polynucleotides, releasing free uracil.. Its function is as follows. Excises ethenocytosine and uracil, which can arise by alkylation or deamination of cytosine, respectively, from the corresponding mispairs with guanine in ds-DNA. It is capable of hydrolyzing the carbon-nitrogen bond between the sugar-phosphate backbone of the DNA and the mispaired base. The complementary strand guanine functions in substrate recognition. Required for DNA damage lesion repair in stationary-phase cells. In Citrobacter koseri (strain ATCC BAA-895 / CDC 4225-83 / SGSC4696), this protein is G/U mismatch-specific DNA glycosylase.